The primary structure comprises 103 residues: Probable protease inhibitor Egf0.4a (103 aa).

The first 22 residues, methionine 1–threonine 22, serve as a signal peptide directing secretion. Residues cysteine 35–cysteine 87 form the TIL domain.

It belongs to the polydnaviridae EGF-like motif protein family.

The chain is Probable protease inhibitor Egf0.4a (O4) from Microplitis demolitor (Parasitoid wasp).